We begin with the raw amino-acid sequence, 587 residues long: MRHLQDQTVLILGLGASGLAMARWWVRHGASVTVADTREAPALLATLRQELPAVKFVSGAFTPDLVQGSAVRAVYRSPGLAPAVIAPVVDAARAMGLPVGGELDLFSRALADLREVSATEVVKDHLVPPESPLSDASDISDASDATDAVDSLEGEAALAADASGDIEEMSASDVVEGAPVSEDAGEDAALPALLAPAPAEQAAGYRPVVLAITGTNGKTTVTSLVGQLVQRAGKTVAVAGNIGPTLLDTLSAHLDADTLPQVWVLELSSFQLADAQDFEPTAAVVLNVTQDHLDWHGDMDAYVAAKARIFGRSTFMLLNRDDPRVMEMLPTPVKVRLRPPQVRPHSTFGAGEPQRPGDYGIETVNGMAWLVRAAQADETIKRRKGEEVELHIQRLMPLDALRIRGRHNATNALAALGLAVAAGCSLAPMLHGLREYRGEPHRVESIAVVNDVEYFDDSKGTNVGATAAALAGLGAERKLVVILGGEGKGQDFSPLAEPVSHHARAVVLIGKDAPLIRSALQASQVALLDAASMQEAVSLAAAQAHTGDAVLMSPACASFDMFDNYEHRAQVFCDAVQALAQEQGVVL.

Positions 124–147 (DHLVPPESPLSDASDISDASDATD) are disordered. Residues 132-147 (PLSDASDISDASDATD) show a composition bias toward low complexity. 214 to 220 (GTNGKTT) is a binding site for ATP.

This sequence belongs to the MurCDEF family.

Its subcellular location is the cytoplasm. The enzyme catalyses UDP-N-acetyl-alpha-D-muramoyl-L-alanine + D-glutamate + ATP = UDP-N-acetyl-alpha-D-muramoyl-L-alanyl-D-glutamate + ADP + phosphate + H(+). It participates in cell wall biogenesis; peptidoglycan biosynthesis. Cell wall formation. Catalyzes the addition of glutamate to the nucleotide precursor UDP-N-acetylmuramoyl-L-alanine (UMA). This chain is UDP-N-acetylmuramoylalanine--D-glutamate ligase, found in Polaromonas sp. (strain JS666 / ATCC BAA-500).